Consider the following 1331-residue polypeptide: Serine/threonine-protein kinase SSK22 (1331 aa).

The Protein kinase domain maps to Trp1034–Met1310. Residues Ile1040–Val1048 and Lys1063 contribute to the ATP site. Residue Asp1158 is the Proton acceptor of the active site.

This sequence belongs to the protein kinase superfamily. STE Ser/Thr protein kinase family. MAP kinase kinase kinase subfamily. In terms of assembly, interacts with by SSK1.

The enzyme catalyses L-seryl-[protein] + ATP = O-phospho-L-seryl-[protein] + ADP + H(+). It catalyses the reaction L-threonyl-[protein] + ATP = O-phospho-L-threonyl-[protein] + ADP + H(+). In terms of biological role, kinase involved in a signal transduction pathway that is activated by changes in the osmolarity of the extracellular environment. Activates the PBS2 MAP kinase kinase by phosphorylation. This is Serine/threonine-protein kinase SSK22 (SSK22) from Saccharomyces cerevisiae (strain ATCC 204508 / S288c) (Baker's yeast).